The sequence spans 557 residues: Aerobic glycerol-3-phosphate dehydrogenase (557 aa).

21–49 (DLVIIGGGITGAGIALDASERGMKVALVE) lines the FAD pocket.

This sequence belongs to the FAD-dependent glycerol-3-phosphate dehydrogenase family. FAD is required as a cofactor.

It is found in the cytoplasm. The enzyme catalyses a quinone + sn-glycerol 3-phosphate = dihydroxyacetone phosphate + a quinol. The protein operates within polyol metabolism; glycerol degradation via glycerol kinase pathway; glycerone phosphate from sn-glycerol 3-phosphate (aerobic route): step 1/1. In Staphylococcus aureus (strain bovine RF122 / ET3-1), this protein is Aerobic glycerol-3-phosphate dehydrogenase (glpD).